Reading from the N-terminus, the 226-residue chain is 2-C-methyl-D-erythritol 4-phosphate cytidylyltransferase (226 aa).

Belongs to the IspD/TarI cytidylyltransferase family. IspD subfamily.

It catalyses the reaction 2-C-methyl-D-erythritol 4-phosphate + CTP + H(+) = 4-CDP-2-C-methyl-D-erythritol + diphosphate. It functions in the pathway isoprenoid biosynthesis; isopentenyl diphosphate biosynthesis via DXP pathway; isopentenyl diphosphate from 1-deoxy-D-xylulose 5-phosphate: step 2/6. In terms of biological role, catalyzes the formation of 4-diphosphocytidyl-2-C-methyl-D-erythritol from CTP and 2-C-methyl-D-erythritol 4-phosphate (MEP). This chain is 2-C-methyl-D-erythritol 4-phosphate cytidylyltransferase, found in Bacillus cereus (strain ATCC 14579 / DSM 31 / CCUG 7414 / JCM 2152 / NBRC 15305 / NCIMB 9373 / NCTC 2599 / NRRL B-3711).